The chain runs to 800 residues: Ent-copalyl diphosphate synthase 2, chloroplastic (800 aa).

Residues 1 to 47 (MQMQVLTAASSLPRATLLRPAAAEPWRQSFLQLQARPIQRPGIMLHC) constitute a chloroplast transit peptide. The segment at 52–80 (QGQETRERRQLDDDEHARPPQGGDDDVAA) is disordered. Over residues 55–69 (ETRERRQLDDDEHAR) the composition is skewed to basic and acidic residues. Residue Lys-242 coordinates substrate. Mg(2+) contacts are provided by Asp-374 and Asp-376. Positions 374–377 (DIDD) match the DXDD motif motif. Lys-461 is a binding site for substrate.

This sequence belongs to the terpene synthase family. It depends on Mg(2+) as a cofactor.

The protein localises to the plastid. It localises to the chloroplast. It carries out the reaction (2E,6E,10E)-geranylgeranyl diphosphate = ent-copalyl diphosphate. Its pathway is secondary metabolite biosynthesis; terpenoid biosynthesis. Functionally, catalyzes the conversion of geranylgeranyl diphosphate to the phytoalexin precursor ent-copalyl diphosphate. The sequence is that of Ent-copalyl diphosphate synthase 2, chloroplastic from Oryza sativa subsp. japonica (Rice).